The following is a 553-amino-acid chain: Flotillin family inner membrane protein YqiK (553 aa).

Residues 1–9 (MDDIVNSVP) lie on the Periplasmic side of the membrane. The helical transmembrane segment at 10 to 30 (SWMFTAIIAVCILFIIGIIFA) threads the bilayer. At 31-553 (RLYRRASAEQ…STTPVEEKAE (523 aa)) the chain is on the cytoplasmic side.

This sequence belongs to the band 7/mec-2 family. Flotillin subfamily. As to quaternary structure, homooligomerizes.

The protein resides in the cell inner membrane. It localises to the membrane raft. In terms of biological role, found in membrane microdomains that may be equivalent to eukaryotic membrane rafts. FMMs are highly dynamic and increase in number as cells age. Flotillins are thought to be important factors in membrane fluidity. This chain is Flotillin family inner membrane protein YqiK (yqiK), found in Escherichia coli (strain K12).